The following is a 346-amino-acid chain: Magnesium-protoporphyrin IX monomethyl ester [oxidative] cyclase (346 aa).

It belongs to the AcsF family. The cofactor is Fe cation.

The enzyme catalyses Mg-protoporphyrin IX 13-monomethyl ester + 3 NADPH + 3 O2 + 2 H(+) = 3,8-divinyl protochlorophyllide a + 3 NADP(+) + 5 H2O. It functions in the pathway porphyrin-containing compound metabolism; chlorophyll biosynthesis (light-independent). Its function is as follows. Catalyzes the formation of the isocyclic ring in chlorophyll biosynthesis. Mediates the cyclase reaction, which results in the formation of divinylprotochlorophyllide (Pchlide) characteristic of all chlorophylls from magnesium-protoporphyrin IX 13-monomethyl ester (MgPMME). This chain is Magnesium-protoporphyrin IX monomethyl ester [oxidative] cyclase, found in Gloeobacter violaceus (strain ATCC 29082 / PCC 7421).